We begin with the raw amino-acid sequence, 145 residues long: D-aminoacyl-tRNA deacylase (145 aa).

The Gly-cisPro motif, important for rejection of L-amino acids signature appears at 137–138 (GP).

It belongs to the DTD family. As to quaternary structure, homodimer.

It localises to the cytoplasm. The enzyme catalyses glycyl-tRNA(Ala) + H2O = tRNA(Ala) + glycine + H(+). It catalyses the reaction a D-aminoacyl-tRNA + H2O = a tRNA + a D-alpha-amino acid + H(+). Functionally, an aminoacyl-tRNA editing enzyme that deacylates mischarged D-aminoacyl-tRNAs. Also deacylates mischarged glycyl-tRNA(Ala), protecting cells against glycine mischarging by AlaRS. Acts via tRNA-based rather than protein-based catalysis; rejects L-amino acids rather than detecting D-amino acids in the active site. By recycling D-aminoacyl-tRNA to D-amino acids and free tRNA molecules, this enzyme counteracts the toxicity associated with the formation of D-aminoacyl-tRNA entities in vivo and helps enforce protein L-homochirality. This is D-aminoacyl-tRNA deacylase from Teredinibacter turnerae (strain ATCC 39867 / T7901).